The following is a 90-amino-acid chain: MSRTVNCRKFKQELEGLDFPPMPGAKGQDIFENVSKKAWQEWLSHQTMLINEKHLNMMDLTDRTYLNQQMDKFLSGEEYDQAEGYVAPEK.

Belongs to the Fe(2+)-trafficking protein family.

In terms of biological role, could be a mediator in iron transactions between iron acquisition and iron-requiring processes, such as synthesis and/or repair of Fe-S clusters in biosynthetic enzymes. This is Probable Fe(2+)-trafficking protein from Saccharophagus degradans (strain 2-40 / ATCC 43961 / DSM 17024).